Consider the following 159-residue polypeptide: SsrA-binding protein (159 aa).

Positions 132–159 (KDFDKRHTEKERDSDREIQRAMRHGKDD) are disordered.

The protein belongs to the SmpB family.

The protein resides in the cytoplasm. Its function is as follows. Required for rescue of stalled ribosomes mediated by trans-translation. Binds to transfer-messenger RNA (tmRNA), required for stable association of tmRNA with ribosomes. tmRNA and SmpB together mimic tRNA shape, replacing the anticodon stem-loop with SmpB. tmRNA is encoded by the ssrA gene; the 2 termini fold to resemble tRNA(Ala) and it encodes a 'tag peptide', a short internal open reading frame. During trans-translation Ala-aminoacylated tmRNA acts like a tRNA, entering the A-site of stalled ribosomes, displacing the stalled mRNA. The ribosome then switches to translate the ORF on the tmRNA; the nascent peptide is terminated with the 'tag peptide' encoded by the tmRNA and targeted for degradation. The ribosome is freed to recommence translation, which seems to be the essential function of trans-translation. This Pseudomonas aeruginosa (strain LESB58) protein is SsrA-binding protein.